We begin with the raw amino-acid sequence, 310 residues long: Very-long-chain enoyl-CoA reductase (310 aa).

Residues 1–85 (MPITIKSRSK…KDLGPQISWR (85 aa)) are Cytoplasmic-facing. Residues 86 to 106 (LVFFCEYLGPVLVHSLFYYLS) form a helical membrane-spanning segment. Over 107 to 141 (TIPTVVDRWHSASSDYNPFLNRVAYFLILGHYGKR) the chain is Lumenal. Residues 142-162 (LFETLFVHQFSLATMPIFNLF) form a helical membrane-spanning segment. Topologically, residues 163–165 (KNC) are cytoplasmic. The chain crosses the membrane as a helical span at residues 166 to 186 (FHYWVLSGLISFGYFGYGFPF). Over 187-201 (GNAKLFKYYSYLKLD) the chain is Lumenal. A helical membrane pass occupies residues 202 to 222 (DLSTLIGLFVLSELWNFYCHI). The Cytoplasmic portion of the chain corresponds to 223–242 (KLRLWGDYQKKHGNAKIRVP). Residues 243-265 (LNQGIFNLFVAPNYTFEVWSWIW) traverse the membrane as a helical segment. The Lumenal segment spans residues 266 to 268 (FTF). The chain crosses the membrane as a helical span at residues 269 to 291 (VFKFNLFAVLFLTVSTAQMYAWA). Topologically, residues 292–310 (QKKNKKYHTRRAFLIPFVF) are cytoplasmic.

This sequence belongs to the steroid 5-alpha reductase family. As to quaternary structure, interacts with the fatty acid elongation system components ELO2 and ELO3. Interacts with NVJ1.

Its subcellular location is the endoplasmic reticulum membrane. It catalyses the reaction a very-long-chain 2,3-saturated fatty acyl-CoA + NADP(+) = a very-long-chain (2E)-enoyl-CoA + NADPH + H(+). It carries out the reaction octadecanoyl-CoA + NADP(+) = (2E)-octadecenoyl-CoA + NADPH + H(+). The enzyme catalyses (2E)-eicosenoyl-CoA + NADPH + H(+) = eicosanoyl-CoA + NADP(+). The catalysed reaction is (2E)-docosenoyl-CoA + NADPH + H(+) = docosanoyl-CoA + NADP(+). It catalyses the reaction (2E)-tetracosenoyl-CoA + NADPH + H(+) = tetracosanoyl-CoA + NADP(+). It carries out the reaction (2E)-hexacosenoyl-CoA + NADPH + H(+) = hexacosanoyl-CoA + NADP(+). It functions in the pathway lipid metabolism; fatty acid biosynthesis. Functionally, catalyzes the last of the four reactions of the long-chain fatty acids elongation cycle. This endoplasmic reticulum-bound enzymatic process, allows the addition of 2 carbons to the chain of long- and very long-chain fatty acids/VLCFAs per cycle. This enzyme reduces the trans-2,3-enoyl-CoA fatty acid intermediate to an acyl-CoA that can be further elongated by entering a new cycle of elongation. Thereby, it participates in the production of VLCFAs of different chain lengths that are involved in multiple biological processes as precursors of membrane lipids and lipid mediators. VLCFAs serve for instance as precursors for ceramide and sphingolipids. Required for normal biogenesis of piecemeal microautophagy of the nucleus (PMN) bleps and vesicles during nutrient stress. The polypeptide is Very-long-chain enoyl-CoA reductase (TSC13) (Saccharomyces cerevisiae (strain ATCC 204508 / S288c) (Baker's yeast)).